The primary structure comprises 187 residues: Ribosome maturation factor RimM (187 aa).

The region spanning E96–G169 is the PRC barrel domain.

Belongs to the RimM family. In terms of assembly, binds ribosomal protein uS19.

It localises to the cytoplasm. Functionally, an accessory protein needed during the final step in the assembly of 30S ribosomal subunit, possibly for assembly of the head region. Essential for efficient processing of 16S rRNA. May be needed both before and after RbfA during the maturation of 16S rRNA. It has affinity for free ribosomal 30S subunits but not for 70S ribosomes. This chain is Ribosome maturation factor RimM, found in Sinorhizobium medicae (strain WSM419) (Ensifer medicae).